A 326-amino-acid chain; its full sequence is Siroheme decarboxylase NirDL subunit (326 aa).

It belongs to the Ahb/Nir family. Forms a complex composed of NirDL, NirG and NirH. All proteins are required for the total conversion of siroheme to didecarboxysiroheme.

It catalyses the reaction siroheme + 2 H(+) = 12,18-didecarboxysiroheme + 2 CO2. It participates in porphyrin-containing compound metabolism. Functionally, involved in heme d1 biosynthesis. Catalyzes the decarboxylation of siroheme into didecarboxysiroheme. Siroheme is probably decarboxylated to monodecarboxysiroheme, which is in turn decarboxylated to didecarboxysiroheme. This Paracoccus pantotrophus (Thiosphaera pantotropha) protein is Siroheme decarboxylase NirDL subunit.